The primary structure comprises 125 residues: Large ribosomal subunit protein bL12 (125 aa).

Positions 96–125 (PAPVKEGATKDEAEEIKKKIEEAGGTAELK) are disordered. Residues 102-117 (GATKDEAEEIKKKIEE) are compositionally biased toward basic and acidic residues.

Belongs to the bacterial ribosomal protein bL12 family. Homodimer. Part of the ribosomal stalk of the 50S ribosomal subunit. Forms a multimeric L10(L12)X complex, where L10 forms an elongated spine to which 2 to 4 L12 dimers bind in a sequential fashion. Binds GTP-bound translation factors.

In terms of biological role, forms part of the ribosomal stalk which helps the ribosome interact with GTP-bound translation factors. Is thus essential for accurate translation. The polypeptide is Large ribosomal subunit protein bL12 (Alcanivorax borkumensis (strain ATCC 700651 / DSM 11573 / NCIMB 13689 / SK2)).